The chain runs to 366 residues: NADP-dependent oxidoreductase domain-containing protein 1 (366 aa).

Belongs to the pyrroline-5-carboxylate reductase family.

Its function is as follows. Probable oxidoreductase. This is NADP-dependent oxidoreductase domain-containing protein 1 (Noxred1) from Mus musculus (Mouse).